The following is a 994-amino-acid chain: E3 ubiquitin-protein ligase Arkadia (994 aa).

Glycyl lysine isopeptide (Lys-Gly) (interchain with G-Cter in SUMO2) cross-links involve residues lysine 19, lysine 28, lysine 34, lysine 47, lysine 59, lysine 73, lysine 87, lysine 96, and lysine 110. Basic and acidic residues predominate over residues 66 to 89 (HLCDDSQKQEKEMNGNQQEQEKSL). The segment at 66–106 (HLCDDSQKQEKEMNGNQQEQEKSLVVRKKRKSQQAGPSYVQ) is disordered. A disordered region spans residues 120–191 (QHLGTPSDED…HKWPRTETES (72 aa)). A compositionally biased stretch (low complexity) spans 132–151 (SSFSDCLSSPSSSLHFGDSD). Positions 164-173 (RHSQTILNAK) are enriched in polar residues. Residue lysine 173 forms a Glycyl lysine isopeptide (Lys-Gly) (interchain with G-Cter in SUMO2) linkage. A compositionally biased stretch (basic residues) spans 174–184 (SRSHSARSHKW). Glycyl lysine isopeptide (Lys-Gly) (interchain with G-Cter in SUMO2) cross-links involve residues lysine 198 and lysine 218. Positions 212–277 (CRKRFVKNNS…SSSTEGEEDL (66 aa)) are disordered. A compositionally biased stretch (basic residues) spans 234-247 (MQRKKREVLARRKY). The segment at 241–404 (VLARRKYALL…VPTTSARMES (164 aa)) is interaction with AXIN1. Positions 252–271 (SSSSSSENDLSSESSSSSST) are enriched in low complexity. Positions 300–304 (VVVIE) match the SUMO interaction motif 1 (SIM) motif. Positions 325–331 (EVEIVTV) match the SUMO interaction motif 2 (SIM) motif. A disordered region spans residues 337 to 371 (SRSTLGHSRSHWSQGSSSHASRPQEPRNRSRISTV). The segment covering 347 to 357 (HWSQGSSSHAS) has biased composition (low complexity). The SUMO interaction motif 3 (SIM) motif lies at 382-386 (VVDLT). Disordered regions lie at residues 388–476 (DEDE…AMPR), 508–537 (HGHH…DPAC), 610–684 (APSQ…VDYV), and 696–742 (ISSH…APPA). Polar residues predominate over residues 395-467 (VPTTSARMES…SRRTTSSAVT (73 aa)). A compositionally biased stretch (basic residues) spans 508 to 522 (HGHHFQHHHHHHHTP). Pro residues predominate over residues 670-680 (NPPPQTQPPPQ). The interval 907–909 (YPH) is ubiquitin binding. Glycyl lysine isopeptide (Lys-Gly) (interchain with G-Cter in SUMO2) cross-links involve residues lysine 923 and lysine 927. Residues cysteine 942 and cysteine 945 each contribute to the Zn(2+) site. The RING-type; atypical zinc-finger motif lies at 942–983 (CTICLSILEEGEDVRRLPCMHLFHQVCVDQWLITNKKCPICR). The ubiquitin binding stretch occupies residues 957 to 961 (RLPCM). Positions 965 and 968 each coordinate Zn(2+).

The protein belongs to the Arkadia family. As to quaternary structure, monomer. Interacts with SMAD6, SMAD7, AXIN1, AXIN2 and SKIL isoform SNON. Interacts with (phosphorylated) SMAD2 and SMAD3. Part of a complex containing RNF111, AXIN1 and SMAD7. Interacts (via SIM domains) with SUMO1 and SUMO2. Broadly expressed.

It localises to the nucleus. The protein localises to the cytoplasm. Its subcellular location is the PML body. The enzyme catalyses S-ubiquitinyl-[E2 ubiquitin-conjugating enzyme]-L-cysteine + [acceptor protein]-L-lysine = [E2 ubiquitin-conjugating enzyme]-L-cysteine + N(6)-ubiquitinyl-[acceptor protein]-L-lysine.. It participates in protein modification; protein ubiquitination. With respect to regulation, binds free ubiquitin non-covalently via its RING-type zinc finger. Ubiquitin-binding leads to enhance the E3 ubiquitin-protein ligase activity by stabilizing the ubiquitin-conjugating enzyme E2 (donor ubiquitin) in the 'closed' conformation and activating ubiquitin transfer. Its function is as follows. E3 ubiquitin-protein ligase. Required for mesoderm patterning during embryonic development. Acts as an enhancer of the transcriptional responses of the SMAD2/SMAD3 effectors, which are activated downstream of BMP. Acts by mediating ubiquitination and degradation of SMAD inhibitors such as SMAD7, inducing their proteasomal degradation and thereby enhancing the transcriptional activity of TGF-beta and BMP. In addition to enhance transcription of SMAD2/SMAD3 effectors, also regulates their turnover by mediating their ubiquitination and subsequent degradation, coupling their activation with degradation, thereby ensuring that only effectors 'in use' are degraded. Activates SMAD3/SMAD4-dependent transcription by triggering signal-induced degradation of SNON isoform of SKIL. Associates with UBE2D2 as an E2 enzyme. Specifically binds polysumoylated chains via SUMO interaction motifs (SIMs) and mediates ubiquitination of sumoylated substrates. Catalyzes 'Lys-63'-linked ubiquitination of sumoylated XPC in response to UV irradiation, promoting nucleotide excision repair. Mediates ubiquitination and degradation of sumoylated PML. The regulation of the BMP-SMAD signaling is however independent of sumoylation and is not dependent of SUMO interaction motifs (SIMs). The polypeptide is E3 ubiquitin-protein ligase Arkadia (Homo sapiens (Human)).